We begin with the raw amino-acid sequence, 182 residues long: Adenylate kinase (182 aa).

Position 12–17 (12–17 (GAGKGT)) interacts with ATP. Residues 32–61 (STGELLRKEIDLDTYLGKQVKDIMNKGELV) are NMP. AMP is bound by residues Thr33, Arg38, 59 to 61 (ELV), 85 to 88 (GYPR), and Gln92. Positions 126–132 (LRGRKDD) are LID. Arg127 contacts ATP. AMP is bound by residues Arg129 and Arg140. Gly168 serves as a coordination point for ATP.

Belongs to the adenylate kinase family. In terms of assembly, monomer.

The protein resides in the cytoplasm. It catalyses the reaction AMP + ATP = 2 ADP. The protein operates within purine metabolism; AMP biosynthesis via salvage pathway; AMP from ADP: step 1/1. Its function is as follows. Catalyzes the reversible transfer of the terminal phosphate group between ATP and AMP. Plays an important role in cellular energy homeostasis and in adenine nucleotide metabolism. In Prochlorococcus marinus (strain MIT 9515), this protein is Adenylate kinase.